The primary structure comprises 517 residues: UDP-N-acetylmuramoyl-tripeptide--D-alanyl-D-alanine ligase (517 aa).

138-144 (GSSGKTS) is an ATP binding site.

The protein belongs to the MurCDEF family. MurF subfamily.

It localises to the cytoplasm. It carries out the reaction D-alanyl-D-alanine + UDP-N-acetyl-alpha-D-muramoyl-L-alanyl-gamma-D-glutamyl-meso-2,6-diaminopimelate + ATP = UDP-N-acetyl-alpha-D-muramoyl-L-alanyl-gamma-D-glutamyl-meso-2,6-diaminopimeloyl-D-alanyl-D-alanine + ADP + phosphate + H(+). It functions in the pathway cell wall biogenesis; peptidoglycan biosynthesis. In terms of biological role, involved in cell wall formation. Catalyzes the final step in the synthesis of UDP-N-acetylmuramoyl-pentapeptide, the precursor of murein. In Mycobacterium leprae (strain TN), this protein is UDP-N-acetylmuramoyl-tripeptide--D-alanyl-D-alanine ligase.